A 388-amino-acid polypeptide reads, in one-letter code: Succinate--CoA ligase [ADP-forming] subunit beta (388 aa).

An ATP-grasp domain is found at 9 to 244 (KEILRKYNVP…LDEEDANEIE (236 aa)). ATP-binding positions include Lys-46, 53 to 55 (GRG), Glu-99, Ala-102, and Glu-107. Residues Asn-199 and Asp-213 each coordinate Mg(2+). Residues Asn-264 and 321–323 (GIM) contribute to the substrate site.

This sequence belongs to the succinate/malate CoA ligase beta subunit family. As to quaternary structure, heterotetramer of two alpha and two beta subunits. Requires Mg(2+) as cofactor.

The catalysed reaction is succinate + ATP + CoA = succinyl-CoA + ADP + phosphate. It catalyses the reaction GTP + succinate + CoA = succinyl-CoA + GDP + phosphate. The protein operates within carbohydrate metabolism; tricarboxylic acid cycle; succinate from succinyl-CoA (ligase route): step 1/1. Functionally, succinyl-CoA synthetase functions in the citric acid cycle (TCA), coupling the hydrolysis of succinyl-CoA to the synthesis of either ATP or GTP and thus represents the only step of substrate-level phosphorylation in the TCA. The beta subunit provides nucleotide specificity of the enzyme and binds the substrate succinate, while the binding sites for coenzyme A and phosphate are found in the alpha subunit. The polypeptide is Succinate--CoA ligase [ADP-forming] subunit beta (Cupriavidus necator (strain ATCC 17699 / DSM 428 / KCTC 22496 / NCIMB 10442 / H16 / Stanier 337) (Ralstonia eutropha)).